A 361-amino-acid chain; its full sequence is uncharacterized protein (361 aa).

At threonine 12 the chain carries Phosphothreonine.

The protein resides in the cytoplasm. It is found in the nucleus. This is an uncharacterized protein from Schizosaccharomyces pombe (strain 972 / ATCC 24843) (Fission yeast).